The primary structure comprises 498 residues: ATP synthase subunit beta, chloroplastic (498 aa).

An ATP-binding site is contributed by 172–179 (GGAGVGKT).

This sequence belongs to the ATPase alpha/beta chains family. As to quaternary structure, F-type ATPases have 2 components, CF(1) - the catalytic core - and CF(0) - the membrane proton channel. CF(1) has five subunits: alpha(3), beta(3), gamma(1), delta(1), epsilon(1). CF(0) has four main subunits: a(1), b(1), b'(1) and c(9-12).

It is found in the plastid. The protein resides in the chloroplast thylakoid membrane. The catalysed reaction is ATP + H2O + 4 H(+)(in) = ADP + phosphate + 5 H(+)(out). Produces ATP from ADP in the presence of a proton gradient across the membrane. The catalytic sites are hosted primarily by the beta subunits. In Coffea arabica (Arabian coffee), this protein is ATP synthase subunit beta, chloroplastic.